The chain runs to 111 residues: Toxin 3FTx-Tel4 (111 aa).

The signal sequence occupies residues 1-19 (MKTLLLALVVVAFMCLGSA). A propeptide spanning residues 20–34 (DQLGLGSQRIDWEQG) is cleaved from the precursor. At Gln35 the chain carries Pyrrolidone carboxylic acid. 5 cysteine pairs are disulfide-bonded: Cys44/Cys68, Cys47/Cys55, Cys61/Cys87, Cys91/Cys102, and Cys103/Cys108.

This sequence belongs to the three-finger toxin family. Ancestral subfamily. Boigatoxin sub-subfamily. As to expression, expressed by the venom gland.

The protein resides in the secreted. Its function is as follows. Potent postsynaptic neurotoxin. Displays readily reversible competitive antagonism at the nicotinic acetylcholine receptor (nAChR). This Telescopus dhara (Egyptian catsnake) protein is Toxin 3FTx-Tel4.